The primary structure comprises 359 residues: Non-classical arabinogalactan protein 31 (359 aa).

The first 24 residues, 1 to 24, serve as a signal peptide directing secretion; it reads MGFIGKSVLVSLVALWCFTSSVFT. Residues 31-215 form a disordered region; sequence TQTPSLAPAP…PPVSPPTKPP (185 aa). Positions 44–66 are enriched in basic residues; that stretch reads HHGHHHPHPPHHHHPHPHPHPHP. The span at 67 to 215 shows a compositional bias: pro residues; it reads PAKSPVKPPV…PPVSPPTKPP (149 aa). 42 positions are modified to 4-hydroxyproline: proline 71, proline 75, proline 79, proline 82, proline 83, proline 87, proline 91, proline 95, proline 99, proline 103, proline 107, proline 111, proline 114, proline 115, proline 119, proline 123, proline 127, proline 131, proline 135, proline 139, proline 143, proline 147, proline 151, proline 155, proline 159, proline 163, proline 167, proline 171, proline 175, proline 179, proline 183, proline 186, proline 187, proline 191, proline 195, proline 199, proline 203, proline 207, proline 210, proline 211, proline 215, and proline 219. 42 O-linked (Ara...) hydroxyproline glycosylation sites follow: proline 71, proline 75, proline 79, proline 82, proline 83, proline 87, proline 91, proline 95, proline 99, proline 103, proline 107, proline 111, proline 114, proline 115, proline 119, proline 123, proline 127, proline 131, proline 135, proline 139, proline 143, proline 147, proline 151, proline 155, proline 159, proline 163, proline 167, proline 171, proline 175, proline 179, proline 183, proline 186, proline 187, proline 191, proline 195, proline 199, proline 203, proline 207, proline 210, proline 211, proline 215, and proline 219. Residues 90-109 form repeat 1; that stretch reads PPVYPPTKAPVKPPTKPPVK. 3 tandem repeats follow at residues 122–141, 142–161, and 162–181. 2 N-linked (GlcNAc...) asparagine glycosylation sites follow: asparagine 226 and asparagine 269.

Belongs to the non-classical AGP family. Post-translationally, hydroxylated on numerous prolines in the proline-rich region. O-glycosylated on numerous hydroxyprolines in the proline-rich region; noncontiguous hydroxylproline residues are glycosylated with arabinogalactan. As to expression, expressed in vascular bundles of roots, leaves, sepals and stamen filaments, and pistils but not stigma.

The protein resides in the secreted. It is found in the cell wall. In terms of biological role, proteoglycan that may contribute to the strengthening of cell walls. The sequence is that of Non-classical arabinogalactan protein 31 from Arabidopsis thaliana (Mouse-ear cress).